A 418-amino-acid polypeptide reads, in one-letter code: MTYLEIEGTNHLSGNVAISGAKNAALPLIVSSILVKNEVKINNVPNVADIKTLISLLENLGAKVNFQNNNALLNTNTLNQTIAKYDIVRKMRASILTLGPLLARFGHCEVSLPGGCAIGQRPIDLHLLALEKMGANIQIKQGYVVASGNLKGNEILFDKITVTGSENIIMAAALAKGKTKLLNVAKEPEVVQLCEVLKDAGLEIKGIGTDELEIYGTDGELLEFKEFSVIPDRIEAGTYLCAGAITNSKITLDKVNATHLSAVLAKLHQMGFETLITEDSITLLPAKEIKPVEIMTSEHPGFPTDMQAQFMALALKANGTSIIDERLFENRFMHVSELLRMGADIKLNGHIATIVGGKELNAADVMATDLRASSALILAALAAKGTSKVHRIYHLDRGYENLEEKFKGLGVKITRLEE.

Position 22–23 (22–23) interacts with phosphoenolpyruvate; it reads KN. R92 serves as a coordination point for UDP-N-acetyl-alpha-D-glucosamine. The Proton donor role is filled by C116. C116 carries the 2-(S-cysteinyl)pyruvic acid O-phosphothioketal modification. UDP-N-acetyl-alpha-D-glucosamine is bound by residues 121 to 125, D305, and L327; that span reads RPIDL.

This sequence belongs to the EPSP synthase family. MurA subfamily.

Its subcellular location is the cytoplasm. The catalysed reaction is phosphoenolpyruvate + UDP-N-acetyl-alpha-D-glucosamine = UDP-N-acetyl-3-O-(1-carboxyvinyl)-alpha-D-glucosamine + phosphate. Its pathway is cell wall biogenesis; peptidoglycan biosynthesis. In terms of biological role, cell wall formation. Adds enolpyruvyl to UDP-N-acetylglucosamine. This is UDP-N-acetylglucosamine 1-carboxyvinyltransferase from Campylobacter jejuni subsp. doylei (strain ATCC BAA-1458 / RM4099 / 269.97).